A 407-amino-acid polypeptide reads, in one-letter code: Succinyl-diaminopimelate desuccinylase (407 aa).

Polar residues predominate over residues 1–10 (MSDIDNNLTS). Residues 1–20 (MSDIDNNLTSQTHQQATHQQ) form a disordered region. Residues 11 to 20 (QTHQQATHQQ) show a composition bias toward low complexity. His93 lines the Zn(2+) pocket. Residue Asp95 is part of the active site. Asp126 contacts Zn(2+). Residue Glu160 is the Proton acceptor of the active site. Zn(2+) is bound by residues Glu161, Glu189, and His379.

The protein belongs to the peptidase M20A family. DapE subfamily. Homodimer. Requires Zn(2+) as cofactor. It depends on Co(2+) as a cofactor.

It carries out the reaction N-succinyl-(2S,6S)-2,6-diaminopimelate + H2O = (2S,6S)-2,6-diaminopimelate + succinate. It functions in the pathway amino-acid biosynthesis; L-lysine biosynthesis via DAP pathway; LL-2,6-diaminopimelate from (S)-tetrahydrodipicolinate (succinylase route): step 3/3. Catalyzes the hydrolysis of N-succinyl-L,L-diaminopimelic acid (SDAP), forming succinate and LL-2,6-diaminopimelate (DAP), an intermediate involved in the bacterial biosynthesis of lysine and meso-diaminopimelic acid, an essential component of bacterial cell walls. This is Succinyl-diaminopimelate desuccinylase from Psychrobacter arcticus (strain DSM 17307 / VKM B-2377 / 273-4).